Reading from the N-terminus, the 184-residue chain is ATP synthase subunit b, chloroplastic (184 aa).

The helical transmembrane segment at 27 to 49 (LATNPINLSVVLGVLIFFGKGVL) threads the bilayer.

It belongs to the ATPase B chain family. As to quaternary structure, F-type ATPases have 2 components, F(1) - the catalytic core - and F(0) - the membrane proton channel. F(1) has five subunits: alpha(3), beta(3), gamma(1), delta(1), epsilon(1). F(0) has four main subunits: a(1), b(1), b'(1) and c(10-14). The alpha and beta chains form an alternating ring which encloses part of the gamma chain. F(1) is attached to F(0) by a central stalk formed by the gamma and epsilon chains, while a peripheral stalk is formed by the delta, b and b' chains.

It localises to the plastid. It is found in the chloroplast thylakoid membrane. Functionally, f(1)F(0) ATP synthase produces ATP from ADP in the presence of a proton or sodium gradient. F-type ATPases consist of two structural domains, F(1) containing the extramembraneous catalytic core and F(0) containing the membrane proton channel, linked together by a central stalk and a peripheral stalk. During catalysis, ATP synthesis in the catalytic domain of F(1) is coupled via a rotary mechanism of the central stalk subunits to proton translocation. In terms of biological role, component of the F(0) channel, it forms part of the peripheral stalk, linking F(1) to F(0). This is ATP synthase subunit b, chloroplastic from Gossypium barbadense (Sea Island cotton).